Reading from the N-terminus, the 83-residue chain is Exodeoxyribonuclease 7 small subunit (83 aa).

The protein belongs to the XseB family. Heterooligomer composed of large and small subunits.

It localises to the cytoplasm. The enzyme catalyses Exonucleolytic cleavage in either 5'- to 3'- or 3'- to 5'-direction to yield nucleoside 5'-phosphates.. Its function is as follows. Bidirectionally degrades single-stranded DNA into large acid-insoluble oligonucleotides, which are then degraded further into small acid-soluble oligonucleotides. This Novosphingobium aromaticivorans (strain ATCC 700278 / DSM 12444 / CCUG 56034 / CIP 105152 / NBRC 16084 / F199) protein is Exodeoxyribonuclease 7 small subunit.